Consider the following 250-residue polypeptide: 2,3-bisphosphoglycerate-dependent phosphoglycerate mutase (250 aa).

Substrate-binding positions include 10–17 (RHGESQWN), 23–24 (TG), Arg-62, 89–92 (ERHY), Lys-100, 116–117 (RR), and 185–186 (GN). His-11 serves as the catalytic Tele-phosphohistidine intermediate. Glu-89 acts as the Proton donor/acceptor in catalysis.

Belongs to the phosphoglycerate mutase family. BPG-dependent PGAM subfamily. In terms of assembly, homodimer.

The catalysed reaction is (2R)-2-phosphoglycerate = (2R)-3-phosphoglycerate. It functions in the pathway carbohydrate degradation; glycolysis; pyruvate from D-glyceraldehyde 3-phosphate: step 3/5. Functionally, catalyzes the interconversion of 2-phosphoglycerate and 3-phosphoglycerate. The sequence is that of 2,3-bisphosphoglycerate-dependent phosphoglycerate mutase from Salmonella dublin (strain CT_02021853).